Reading from the N-terminus, the 564-residue chain is Chaperonin GroEL 2 (564 aa).

ATP-binding positions include 29 to 32 (TIGP), 86 to 90 (DGTTT), Gly-413, and Asp-493. A disordered region spans residues 521-541 (DKPEPPAPAGDGGGDPMGGMG). The segment covering 530–541 (GDGGGDPMGGMG) has biased composition (gly residues).

The protein belongs to the chaperonin (HSP60) family. In terms of assembly, forms a cylinder of 14 subunits composed of two heptameric rings stacked back-to-back. Interacts with the co-chaperonin GroES.

It is found in the cytoplasm. It carries out the reaction ATP + H2O + a folded polypeptide = ADP + phosphate + an unfolded polypeptide.. Together with its co-chaperonin GroES, plays an essential role in assisting protein folding. The GroEL-GroES system forms a nano-cage that allows encapsulation of the non-native substrate proteins and provides a physical environment optimized to promote and accelerate protein folding. The sequence is that of Chaperonin GroEL 2 from Prochlorococcus marinus (strain MIT 9303).